Consider the following 181-residue polypeptide: Shikimate kinase 2 (181 aa).

12–17 is a binding site for ATP; sequence GCGKTT. Residues Thr16 and Asp32 each contribute to the Mg(2+) site. Positions 34, 58, and 79 each coordinate substrate. Residues 112 to 126 are LID domain; that stretch reads EAEPEADLRPTLTGK. ATP is bound at residue Arg120. Arg139 contacts substrate.

This sequence belongs to the shikimate kinase family. AroL subfamily. In terms of assembly, monomer. Mg(2+) serves as cofactor.

The protein resides in the cytoplasm. It carries out the reaction shikimate + ATP = 3-phosphoshikimate + ADP + H(+). The protein operates within metabolic intermediate biosynthesis; chorismate biosynthesis; chorismate from D-erythrose 4-phosphate and phosphoenolpyruvate: step 5/7. Its function is as follows. Catalyzes the specific phosphorylation of the 3-hydroxyl group of shikimic acid using ATP as a cosubstrate. This is Shikimate kinase 2 from Salmonella enteritidis PT4 (strain P125109).